A 412-amino-acid chain; its full sequence is Peptidase T (412 aa).

Residue histidine 84 coordinates Zn(2+). Aspartate 86 is an active-site residue. Aspartate 146 is a binding site for Zn(2+). The active-site Proton acceptor is glutamate 179. Zn(2+) is bound by residues glutamate 180, aspartate 202, and histidine 385.

This sequence belongs to the peptidase M20B family. Requires Zn(2+) as cofactor.

It is found in the cytoplasm. The enzyme catalyses Release of the N-terminal residue from a tripeptide.. Its function is as follows. Cleaves the N-terminal amino acid of tripeptides. The chain is Peptidase T from Pasteurella multocida (strain Pm70).